The sequence spans 476 residues: Glycogen synthase (476 aa).

Lysine 15 contacts ADP-alpha-D-glucose.

The protein belongs to the glycosyltransferase 1 family. Bacterial/plant glycogen synthase subfamily.

It catalyses the reaction [(1-&gt;4)-alpha-D-glucosyl](n) + ADP-alpha-D-glucose = [(1-&gt;4)-alpha-D-glucosyl](n+1) + ADP + H(+). It participates in glycan biosynthesis; glycogen biosynthesis. Synthesizes alpha-1,4-glucan chains using ADP-glucose. This is Glycogen synthase from Yersinia pseudotuberculosis serotype IB (strain PB1/+).